The primary structure comprises 168 residues: Disulfide bond formation protein B 2 (168 aa).

Topologically, residues 1–9 (MLPARLRTF) are cytoplasmic. Residues 10-26 (FLPACLVALAVLVASFR) form a helical membrane-spanning segment. At 27–44 (LENTVGLMPCPLCLSQRL) the chain is on the periplasmic side. Cys-36 and Cys-39 are disulfide-bonded. The chain crosses the membrane as a helical span at residues 45 to 61 (LLGGYALLCFAAVLQAP). The Cytoplasmic portion of the chain corresponds to 62 to 67 (GTRGIL). The helical transmembrane segment at 68-85 (RYARLALGCSLAGALLAA) threads the bilayer. The Periplasmic portion of the chain corresponds to 86 to 140 (RHVWLQGAEGVNEVCPVPIGRVFEQSWSEAARQLLLGGPDCRSLAWSFLDLTLPE). Cys-100 and Cys-126 are joined by a disulfide. A helical transmembrane segment spans residues 141–159 (WSLLAFLLLAVLPLSCLLA). Residues 160-168 (YRFRTLART) are Cytoplasmic-facing.

It belongs to the DsbB family.

It localises to the cell inner membrane. Required for disulfide bond formation in some periplasmic proteins. Acts by oxidizing the DsbA protein. This Pseudomonas putida (strain ATCC 47054 / DSM 6125 / CFBP 8728 / NCIMB 11950 / KT2440) protein is Disulfide bond formation protein B 2 (dsbB2).